Reading from the N-terminus, the 238-residue chain is Type III pantothenate kinase (238 aa).

ATP is bound at residue 6–13 (DSGNTRIK). Substrate is bound by residues Tyr90 and 97–100 (GVDR). The Proton acceptor role is filled by Asp99. ATP is bound at residue Thr122. Thr172 contacts substrate.

The protein belongs to the type III pantothenate kinase family. As to quaternary structure, homodimer. Requires NH4(+) as cofactor. K(+) serves as cofactor.

It localises to the cytoplasm. It carries out the reaction (R)-pantothenate + ATP = (R)-4'-phosphopantothenate + ADP + H(+). It participates in cofactor biosynthesis; coenzyme A biosynthesis; CoA from (R)-pantothenate: step 1/5. Its function is as follows. Catalyzes the phosphorylation of pantothenate (Pan), the first step in CoA biosynthesis. This chain is Type III pantothenate kinase, found in Dechloromonas aromatica (strain RCB).